We begin with the raw amino-acid sequence, 32 residues long: Delta-conotoxin-like CnVID (32 aa).

Cystine bridges form between Cys3–Cys18, Cys10–Cys22, and Cys17–Cys27. Pro6 and Pro14 each carry 4-hydroxyproline.

It belongs to the conotoxin O1 superfamily. In terms of tissue distribution, expressed by the venom duct.

Its subcellular location is the secreted. Functionally, delta-conotoxins bind to site 6 of voltage-gated sodium channels (Nav) and inhibit the inactivation process. This toxin acts on Nav1.2/SCN2A, Nav1.3/SCN3A and Nav1.6/SCN8A (EC(50)=1.7 uM). The polypeptide is Delta-conotoxin-like CnVID (Conus consors (Singed cone)).